A 509-amino-acid chain; its full sequence is ATP synthase subunit alpha (509 aa).

An ATP-binding site is contributed by 169–176 (GDRQTGKT).

This sequence belongs to the ATPase alpha/beta chains family. As to quaternary structure, F-type ATPases have 2 components, CF(1) - the catalytic core - and CF(0) - the membrane proton channel. CF(1) has five subunits: alpha(3), beta(3), gamma(1), delta(1), epsilon(1). CF(0) has four main subunits: a(1), b(1), b'(1) and c(9-12).

It is found in the cell inner membrane. It catalyses the reaction ATP + H2O + 4 H(+)(in) = ADP + phosphate + 5 H(+)(out). Functionally, produces ATP from ADP in the presence of a proton gradient across the membrane. The alpha chain is a regulatory subunit. The sequence is that of ATP synthase subunit alpha from Erythrobacter litoralis (strain HTCC2594).